The chain runs to 674 residues: Xaa-Pro aminopeptidase 2 (674 aa).

Residues 1–22 (MAQAYWQCYPWLVLLCACAWSY) form the signal peptide. Asn-65 carries N-linked (GlcNAc...) asparagine glycosylation. Residue Arg-116 participates in substrate binding. Residues Asn-270, Asn-278, and Asn-293 are each glycosylated (N-linked (GlcNAc...) asparagine). His-430 lines the substrate pocket. Residues Asp-450, Asp-461, and His-524 each coordinate Zn(2+). 3 residues coordinate substrate: His-524, His-533, and Glu-555. Glu-555 and Glu-569 together coordinate Zn(2+). The GPI-anchor amidated alanine moiety is linked to residue Ala-650. Positions 651-674 (RAPHIISWTSLWVASALAILSWSS) are cleaved as a propeptide — removed in mature form.

Belongs to the peptidase M24B family. As to quaternary structure, homotrimer. Zn(2+) serves as cofactor. Post-translationally, N-glycosylated. In terms of tissue distribution, strongly expressed in small intestine, heart and lung. Also detected in testis, skeletal muscle, spleen, liver, kidney, brain, uterus, eye, lymph node, thymus, stomach, prostate and bone marrow.

It is found in the cell membrane. The enzyme catalyses Release of any N-terminal amino acid, including proline, that is linked to proline, even from a dipeptide or tripeptide.. Functionally, membrane-bound metalloprotease which catalyzes the removal of a penultimate prolyl residue from the N-termini of peptides, such as Arg-Pro-Pro. May play a role in the metabolism of the vasodilator bradykinin. In Mus musculus (Mouse), this protein is Xaa-Pro aminopeptidase 2.